The following is a 284-amino-acid chain: Bifunctional protein FolD (284 aa).

Residues 166–168, Ser-191, and Ile-232 each bind NADP(+); that span reads GAS.

This sequence belongs to the tetrahydrofolate dehydrogenase/cyclohydrolase family. Homodimer.

The catalysed reaction is (6R)-5,10-methylene-5,6,7,8-tetrahydrofolate + NADP(+) = (6R)-5,10-methenyltetrahydrofolate + NADPH. It carries out the reaction (6R)-5,10-methenyltetrahydrofolate + H2O = (6R)-10-formyltetrahydrofolate + H(+). It functions in the pathway one-carbon metabolism; tetrahydrofolate interconversion. Its function is as follows. Catalyzes the oxidation of 5,10-methylenetetrahydrofolate to 5,10-methenyltetrahydrofolate and then the hydrolysis of 5,10-methenyltetrahydrofolate to 10-formyltetrahydrofolate. The protein is Bifunctional protein FolD of Neisseria gonorrhoeae (strain ATCC 700825 / FA 1090).